We begin with the raw amino-acid sequence, 100 residues long: Toxin Rv0299 (100 aa).

Functionally, toxic component of a type II toxin-antitoxin (TA) system. Upon expression in M.smegmatis inhibits colony formation. Its toxic effect is neutralized by coexpression with cognate antitoxin Rv0298/MT0312. The protein is Toxin Rv0299 of Mycobacterium tuberculosis (strain ATCC 25618 / H37Rv).